The sequence spans 277 residues: Undecaprenyl-diphosphatase (277 aa).

The next 7 helical transmembrane spans lie at isoleucine 3–proline 23, alanine 44–tryptophan 64, glutamine 82–glycine 102, leucine 109–alanine 129, threonine 189–phenylalanine 209, alanine 218–isoleucine 238, and phenylalanine 253–valine 273.

This sequence belongs to the UppP family.

It localises to the cell inner membrane. The enzyme catalyses di-trans,octa-cis-undecaprenyl diphosphate + H2O = di-trans,octa-cis-undecaprenyl phosphate + phosphate + H(+). Catalyzes the dephosphorylation of undecaprenyl diphosphate (UPP). Confers resistance to bacitracin. In Polaromonas naphthalenivorans (strain CJ2), this protein is Undecaprenyl-diphosphatase.